Reading from the N-terminus, the 45-residue chain is Cytochrome b559 subunit beta (45 aa).

The chain crosses the membrane as a helical span at residues 20–36; the sequence is WIAVHTLAVPTVFFLGA. Residue His24 coordinates heme.

Belongs to the PsbE/PsbF family. In terms of assembly, heterodimer of an alpha subunit and a beta subunit. PSII is composed of 1 copy each of membrane proteins PsbA, PsbB, PsbC, PsbD, PsbE, PsbF, PsbH, PsbI, PsbJ, PsbK, PsbL, PsbM, PsbT, PsbX, PsbY, PsbZ, Psb30/Ycf12, peripheral proteins PsbO, CyanoQ (PsbQ), PsbU, PsbV and a large number of cofactors. It forms dimeric complexes. It depends on heme b as a cofactor.

The protein localises to the cellular thylakoid membrane. Functionally, this b-type cytochrome is tightly associated with the reaction center of photosystem II (PSII). PSII is a light-driven water:plastoquinone oxidoreductase that uses light energy to abstract electrons from H(2)O, generating O(2) and a proton gradient subsequently used for ATP formation. It consists of a core antenna complex that captures photons, and an electron transfer chain that converts photonic excitation into a charge separation. This chain is Cytochrome b559 subunit beta, found in Nostoc sp. (strain PCC 7120 / SAG 25.82 / UTEX 2576).